Consider the following 231-residue polypeptide: Small ribosomal subunit protein uS3 (231 aa).

Residues 39 to 107 form the KH type-2 domain; that stretch reads IRKFIKEKLF…QVSVNIVEIK (69 aa).

This sequence belongs to the universal ribosomal protein uS3 family. Part of the 30S ribosomal subunit. Forms a tight complex with proteins S10 and S14.

Its function is as follows. Binds the lower part of the 30S subunit head. Binds mRNA in the 70S ribosome, positioning it for translation. The chain is Small ribosomal subunit protein uS3 from Pelotomaculum thermopropionicum (strain DSM 13744 / JCM 10971 / SI).